A 977-amino-acid chain; its full sequence is RNA-binding protein 15 (977 aa).

Composition is skewed to basic and acidic residues over residues 1-10 (MRTAGRDPVP), 35-52 (RGDD…ERSP), 59-72 (RGGE…ERSK), and 98-113 (LHLD…REYD). The disordered stretch occupies residues 1–167 (MRTAGRDPVP…SSAPGGGDGA (167 aa)). The residue at position 109 (serine 109) is a Phosphoserine. Over residues 119–130 (SSSRLHSYSSPS) the composition is skewed to low complexity. Over residues 135-150 (SGGGESRSSSRGGGGE) the composition is skewed to gly residues. Over residues 151-160 (SRSSGAASSA) the composition is skewed to low complexity. Residues 170-252 (KTLKISELGS…RPLKIEAVYV (83 aa)) enclose the RRM 1 domain. Phosphoserine is present on residues serine 179, serine 208, and serine 210. A Glycyl lysine isopeptide (Lys-Gly) (interchain with G-Cter in SUMO2) cross-link involves residue lysine 246. Phosphoserine occurs at positions 253, 257, and 259. Residues 256–298 (RSRSPLDKDTYPPSASVVGASVGGHRHPPGGGGGQRSLSPGGA) are disordered. At tyrosine 266 the chain carries Phosphotyrosine. Serine 292, serine 294, and serine 365 each carry phosphoserine. RRM domains follow at residues 374-451 (RTLF…YGKA) and 455-529 (TRLW…FADT). Glycyl lysine isopeptide (Lys-Gly) (interchain with G-Cter in SUMO2) cross-links involve residues lysine 406, lysine 420, and lysine 445. Lysine 450 is modified (N6-acetyllysine). 2 stretches are compositionally biased toward basic and acidic residues: residues 555 to 581 (HRAP…RDLY) and 613 to 661 (SLDR…ESDR). The segment at 555-778 (HRAPDPLRGA…KQDGGTAPVA (224 aa)) is disordered. Phosphothreonine is present on threonine 568. At arginine 578 the chain carries Asymmetric dimethylarginine; alternate; by PRMT1. Arginine 578 is modified (omega-N-methylarginine; alternate; by PRMT1). Phosphoserine is present on residues serine 622, serine 656, serine 670, serine 674, serine 700, and serine 741. Basic and acidic residues-rich tracts occupy residues 673-728 (RSPE…AERD) and 741-750 (SPLKKEDRSD). Lysine 744 is covalently cross-linked (Glycyl lysine isopeptide (Lys-Gly) (interchain with G-Cter in SUMO2)). The span at 752 to 771 (SAPSTSTASSKLKSPSQKQD) shows a compositional bias: polar residues. Residues serine 765, serine 767, and serine 781 each carry the phosphoserine modification. An SPOC domain is found at 777-956 (VASASPKLCL…YLVMIIVRGF (180 aa)). The tract at residues 865–884 (GSSDSRSSSSSAASDTATST) is disordered. Low complexity predominate over residues 866-884 (SSDSRSSSSSAASDTATST). Serine 935 is subject to Phosphoserine.

This sequence belongs to the RRM Spen family. As to quaternary structure, component of the WMM complex, a N6-methyltransferase complex composed of a catalytic subcomplex, named MAC, and of an associated subcomplex, named MACOM. The MAC subcomplex is composed of METTL3 and METTL14. The MACOM subcomplex is composed of WTAP, ZC3H13, CBLL1/HAKAI, VIRMA, and, in some cases of RBM15 (RBM15 or RBM15B). Also a component of a MACOM-like complex, named WTAP complex, composed of WTAP, ZC3H13, CBLL1, VIRMA, RBM15, BCLAF1 and THRAP3. Interacts with RBPJ. Interacts (via SPOC domain) with SETD1B. Interacts with NXF1, the interaction is required to promote mRNA export. Interacts with SF3B1. (Microbial infection) Interacts with Epstein-Barr virus BSFL2/BMLF1. In terms of processing, methylated at Arg-578 by PRMT1, leading to promote ubiquitination by CNOT4 and subsequent degradation by the proteasome. Ubiquitinated by CNOT4 following methylation at Arg-578 by PRMT1.

It localises to the nucleus speckle. The protein localises to the nucleus. The protein resides in the nucleoplasm. Its subcellular location is the nucleus envelope. It is found in the nucleus membrane. Functionally, RNA-binding protein that acts as a key regulator of N6-methyladenosine (m6A) methylation of RNAs, thereby regulating different processes, such as hematopoietic cell homeostasis, alternative splicing of mRNAs and X chromosome inactivation mediated by Xist RNA. Associated component of the WMM complex, a complex that mediates N6-methyladenosine (m6A) methylation of RNAs, a modification that plays a role in the efficiency of mRNA splicing and RNA processing. Plays a key role in m6A methylation, possibly by binding target RNAs and recruiting the WMM complex. Involved in random X inactivation mediated by Xist RNA: acts by binding Xist RNA and recruiting the WMM complex, which mediates m6A methylation, leading to target YTHDC1 reader on Xist RNA and promoting transcription repression activity of Xist. Required for the development of multiple tissues, such as the maintenance of the homeostasis of long-term hematopoietic stem cells and for megakaryocyte (MK) and B-cell differentiation. Regulates megakaryocyte differentiation by regulating alternative splicing of genes important for megakaryocyte differentiation; probably regulates alternative splicing via m6A regulation. Required for placental vascular branching morphogenesis and embryonic development of the heart and spleen. Acts as a regulator of thrombopoietin response in hematopoietic stem cells by regulating alternative splicing of MPL. May also function as an mRNA export factor, stimulating export and expression of RTE-containing mRNAs which are present in many retrotransposons that require to be exported prior to splicing. High affinity binding of pre-mRNA to RBM15 may allow targeting of the mRNP to the export helicase DBP5 in a manner that is independent of splicing-mediated NXF1 deposition, resulting in export prior to splicing. May be implicated in HOX gene regulation. The polypeptide is RNA-binding protein 15 (Homo sapiens (Human)).